We begin with the raw amino-acid sequence, 495 residues long: Probable cytochrome P450 508C1 (495 aa).

A helical transmembrane segment spans residues 3 to 21 (LLNSLLLLFLIYLIHSFYI). C442 lines the heme pocket.

The protein belongs to the cytochrome P450 family. It depends on heme as a cofactor.

It is found in the membrane. The protein is Probable cytochrome P450 508C1 (cyp508C1) of Dictyostelium discoideum (Social amoeba).